The primary structure comprises 401 residues: Large ribosomal subunit protein uL4 (401 aa).

It belongs to the universal ribosomal protein uL4 family.

The sequence is that of Large ribosomal subunit protein uL4 (RpL4) from Drosophila melanogaster (Fruit fly).